Here is a 620-residue protein sequence, read N- to C-terminus: 1-deoxy-D-xylulose-5-phosphate synthase (620 aa).

Residues H80 and 121-123 (GHS) contribute to the thiamine diphosphate site. D152 is a binding site for Mg(2+). Thiamine diphosphate-binding positions include 153–154 (GA), N181, Y288, and E370. N181 contributes to the Mg(2+) binding site.

It belongs to the transketolase family. DXPS subfamily. As to quaternary structure, homodimer. The cofactor is Mg(2+). Requires thiamine diphosphate as cofactor.

The enzyme catalyses D-glyceraldehyde 3-phosphate + pyruvate + H(+) = 1-deoxy-D-xylulose 5-phosphate + CO2. It functions in the pathway metabolic intermediate biosynthesis; 1-deoxy-D-xylulose 5-phosphate biosynthesis; 1-deoxy-D-xylulose 5-phosphate from D-glyceraldehyde 3-phosphate and pyruvate: step 1/1. Catalyzes the acyloin condensation reaction between C atoms 2 and 3 of pyruvate and glyceraldehyde 3-phosphate to yield 1-deoxy-D-xylulose-5-phosphate (DXP). This Shigella dysenteriae serotype 1 (strain Sd197) protein is 1-deoxy-D-xylulose-5-phosphate synthase.